We begin with the raw amino-acid sequence, 675 residues long: INO80 complex subunit D (675 aa).

Disordered stretches follow at residues Met1–Gln39, Thr183–Pro203, Leu274–Val324, Asp473–Lys523, and Val627–Ser675. Low complexity-rich tracts occupy residues Gln282–Ile318, Asn482–Asn519, and Asn634–Ser648. Positions Glu664–Ser675 are enriched in basic and acidic residues.

The protein belongs to the INO80D family. As to quaternary structure, component of the chromatin-remodeling INO80 complex.

The protein resides in the nucleus. Its function is as follows. Putative regulatory component of the chromatin remodeling INO80 complex which is involved in transcriptional regulation, DNA replication and probably DNA repair. The sequence is that of INO80 complex subunit D from Dictyostelium discoideum (Social amoeba).